The primary structure comprises 259 residues: Hydroxyacylglutathione hydrolase (259 aa).

Zn(2+)-binding residues include His56, His58, Asp60, His61, His112, Asp133, and His171.

This sequence belongs to the metallo-beta-lactamase superfamily. Glyoxalase II family. In terms of assembly, monomer. It depends on Zn(2+) as a cofactor.

It carries out the reaction an S-(2-hydroxyacyl)glutathione + H2O = a 2-hydroxy carboxylate + glutathione + H(+). The protein operates within secondary metabolite metabolism; methylglyoxal degradation; (R)-lactate from methylglyoxal: step 2/2. In terms of biological role, thiolesterase that catalyzes the hydrolysis of S-D-lactoyl-glutathione to form glutathione and D-lactic acid. The chain is Hydroxyacylglutathione hydrolase from Pseudomonas entomophila (strain L48).